The sequence spans 212 residues: Ribosomal RNA small subunit methyltransferase G (212 aa).

S-adenosyl-L-methionine-binding positions include Gly-76, Met-81, 127–128 (VE), and Arg-145.

The protein belongs to the methyltransferase superfamily. RNA methyltransferase RsmG family.

The protein resides in the cytoplasm. It carries out the reaction guanosine(527) in 16S rRNA + S-adenosyl-L-methionine = N(7)-methylguanosine(527) in 16S rRNA + S-adenosyl-L-homocysteine. Specifically methylates the N7 position of guanine in position 527 of 16S rRNA. This Acinetobacter baylyi (strain ATCC 33305 / BD413 / ADP1) protein is Ribosomal RNA small subunit methyltransferase G.